The sequence spans 562 residues: mRNA cleavage and polyadenylation factor CLP1 (562 aa).

Residues 1-27 (MSLPGLELSQQPIEARRAPPQPTQISL) form a disordered region. ATP contacts are provided by residues Glu32, Lys71, and 154–159 (DAGKTS). Positions 415 to 483 (EDEYDPSKFD…STTPFTNLPS (69 aa)) are disordered. Residues 445–479 (SLQPPSGLLPGLRSELPSATTGFPSASTSSTTPFT) show a composition bias toward low complexity.

It belongs to the Clp1 family. Clp1 subfamily. Component of a pre-mRNA cleavage factor complex. Interacts directly with PCF11.

It localises to the nucleus. Required for endonucleolytic cleavage during polyadenylation-dependent pre-mRNA 3'-end formation. This chain is mRNA cleavage and polyadenylation factor CLP1, found in Coccidioides immitis (strain RS) (Valley fever fungus).